The following is a 114-amino-acid chain: MSDDVALPLEFTEAAANKVKHLIADEDNPNLKLRVYITGGGCSGFQYGFTFDDQVNEGDMTIEKQGVGLVVDPMSLQYLVGGSVDYTEGLEGSRFIVTNPNAKSTCGCGSSFSV.

Residues cysteine 42, cysteine 106, and cysteine 108 each coordinate iron-sulfur cluster.

It belongs to the HesB/IscA family. As to quaternary structure, homodimer. Iron-sulfur cluster is required as a cofactor.

Functionally, required for insertion of 4Fe-4S clusters for at least IspG. In Klebsiella pneumoniae subsp. pneumoniae (strain ATCC 700721 / MGH 78578), this protein is Iron-sulfur cluster insertion protein ErpA.